A 247-amino-acid chain; its full sequence is Programmed cell death 1 ligand 2 (247 aa).

An N-terminal signal peptide occupies residues 1–19 (MLLLLPILNLSLQLHPVAA). The Extracellular portion of the chain corresponds to 20–221 (LFTVTAPKEV…RMEPKVPRTW (202 aa)). In terms of domain architecture, Ig-like V-type spans 21-118 (FTVTAPKEVY…AWDYKYLTVK (98 aa)). Disulfide bonds link cysteine 42–cysteine 102 and cysteine 143–cysteine 192. N-linked (GlcNAc...) asparagine glycans are attached at residues asparagine 64, asparagine 157, asparagine 163, and asparagine 189. The Ig-like C2-type domain maps to 122-203 (SYMRIDTRIL…FWNAHMKELT (82 aa)). Residues 222 to 242 (PLHVFIPACTIALIFLAIVII) traverse the membrane as a helical segment. Residues 243–247 (QRKRI) are Cytoplasmic-facing.

This sequence belongs to the immunoglobulin superfamily. BTN/MOG family. As to quaternary structure, interacts with PDCD1. Expressed in immature and mature bone marrow-derived dendritic cells and splenic dendritic cells. Highly expressed in placenta, liver and weakly expressed in heart, spleen, lymph nodes and thymus. Also expressed in some tumor cell lines of lymphoid origin.

The protein resides in the cell membrane. In terms of biological role, involved in the costimulatory signal essential for T-cell proliferation and IFNG production in a PDCD1-independent manner. Interaction with PDCD1 inhibits T-cell proliferation by blocking cell cycle progression and cytokine production. The polypeptide is Programmed cell death 1 ligand 2 (Pdcd1lg2) (Mus musculus (Mouse)).